Here is a 110-residue protein sequence, read N- to C-terminus: Large ribosomal subunit protein uL22 (110 aa).

It belongs to the universal ribosomal protein uL22 family. In terms of assembly, part of the 50S ribosomal subunit.

Its function is as follows. This protein binds specifically to 23S rRNA; its binding is stimulated by other ribosomal proteins, e.g. L4, L17, and L20. It is important during the early stages of 50S assembly. It makes multiple contacts with different domains of the 23S rRNA in the assembled 50S subunit and ribosome. Functionally, the globular domain of the protein is located near the polypeptide exit tunnel on the outside of the subunit, while an extended beta-hairpin is found that lines the wall of the exit tunnel in the center of the 70S ribosome. This chain is Large ribosomal subunit protein uL22, found in Syntrophotalea carbinolica (strain DSM 2380 / NBRC 103641 / GraBd1) (Pelobacter carbinolicus).